We begin with the raw amino-acid sequence, 98 residues long: NADH-ubiquinone oxidoreductase chain 4L (98 aa).

Helical transmembrane passes span Met-1 to Met-21, Ser-29 to Leu-49, and Ile-61 to Val-81.

It belongs to the complex I subunit 4L family. In terms of assembly, core subunit of respiratory chain NADH dehydrogenase (Complex I) which is composed of 45 different subunits.

The protein localises to the mitochondrion inner membrane. It carries out the reaction a ubiquinone + NADH + 5 H(+)(in) = a ubiquinol + NAD(+) + 4 H(+)(out). Its function is as follows. Core subunit of the mitochondrial membrane respiratory chain NADH dehydrogenase (Complex I) which catalyzes electron transfer from NADH through the respiratory chain, using ubiquinone as an electron acceptor. Part of the enzyme membrane arm which is embedded in the lipid bilayer and involved in proton translocation. This chain is NADH-ubiquinone oxidoreductase chain 4L (MT-ND4L), found in Vampyressa thyone (Northern little yellow-eared bat).